The primary structure comprises 107 residues: Auxin-responsive protein SAUR50 (107 aa).

The protein belongs to the ARG7 family. Interacts with BZR1. In terms of tissue distribution, expressed in cotyledons, leaves, flowers and siliques.

It is found in the cell membrane. Provide a mechanistic link between auxin and plasma membrane H(+)-ATPases (PM H(+)-ATPases, e.g. AHA1 and AHA2), and triggers PM H(+)-ATPases activity by promoting phosphorylation of their C-terminal autoinhibitory domain as a result of PP2C-D subfamily of type 2C phosphatases inhibition, thus leading to the acidification of the apoplast and the facilitation of solutes and water uptake to drive cell expansion. Triggers plant growth probably by promoting cell elongation. Regulates branch angles and bending. Effector of hormonal and environmental signals in plant growth. The protein is Auxin-responsive protein SAUR50 of Arabidopsis thaliana (Mouse-ear cress).